A 96-amino-acid chain; its full sequence is Conglutin delta 4 (96 aa).

The first 22 residues, 1–22 (MARLTILIAFVAALVLVVHTSA), serve as a signal peptide directing secretion. 2 cysteine pairs are disulfide-bonded: C29–C78 and C80–C91.

Belongs to the 2S seed storage albumins family.

It localises to the endoplasmic reticulum. In Lupinus angustifolius (Narrow-leaved blue lupine), this protein is Conglutin delta 4.